Here is a 150-residue protein sequence, read N- to C-terminus: Large ribosomal subunit protein bL9 (150 aa).

This sequence belongs to the bacterial ribosomal protein bL9 family.

In terms of biological role, binds to the 23S rRNA. This chain is Large ribosomal subunit protein bL9, found in Streptococcus pyogenes serotype M5 (strain Manfredo).